Reading from the N-terminus, the 580-residue chain is Frizzled and smoothened-like protein K (580 aa).

The N-terminal stretch at 1 to 18 is a signal peptide; the sequence is MRVLFILFLFYFYTYTEA. The Extracellular segment spans residues 19–236; it reads QQYYPIDPTG…QWDNIFDTSD (218 aa). Residues 25–154 enclose the FZ domain; the sequence is DPTGKCEQYI…SSDYNLTTYG (130 aa). 5 N-linked (GlcNAc...) asparagine glycosylation sites follow: asparagine 52, asparagine 97, asparagine 149, asparagine 170, and asparagine 186. The helical transmembrane segment at 237-257 threads the bilayer; the sequence is AISLVSLLCSVYLFITYMVIN. The Cytoplasmic segment spans residues 258–264; it reads PKRNKYD. The helical transmembrane segment at 265–285 threads the bilayer; it reads YFFSFFVLSIILMSIAGTIGF. Residues 286 to 308 are Extracellular-facing; that stretch reads SVGGTRKLLCPEINRRGVYTDPA. A helical transmembrane segment spans residues 309–329; sequence VAAAGWIFQFAIINAILWFSI. Residues 330–349 lie on the Cytoplasmic side of the membrane; the sequence is NSFELWFQIKFIKRKLHLIK. The chain crosses the membrane as a helical span at residues 350-370; sequence FYILAVLVISIALSVPLSAIG. Over 371–391 the chain is Extracellular; the sequence is EFNAGLGNFVVWIESGKYQNW. Residues 392 to 412 traverse the membrane as a helical segment; the sequence is FFWGPLGIVLTVGTTFIGLVI. The Cytoplasmic portion of the chain corresponds to 413-434; the sequence is WEIYKIVSSTNKSDFFKLQLKP. The chain crosses the membrane as a helical span at residues 435 to 455; that stretch reads LMNMLLIYLTFVYLFGYNFYI. The Extracellular portion of the chain corresponds to 456 to 490; the sequence is HNSLNGFYGSSEEFKNCIISTDGKDCRIQGPPYSS. A helical membrane pass occupies residues 491–511; it reads ILMFVFCLRIYGVYCIALYGF. Topologically, residues 512–580 are cytoplasmic; it reads SPKTRSIWSN…SMEPDEIILR (69 aa). The Lys-Thr-X-X-X-Trp motif, mediates interaction with the PDZ domain of Dvl family members motif lies at 514 to 519; the sequence is KTRSIW. The interval 542-580 is disordered; sequence TTKGGTSSTDIKMSTNNNSNMDSGGGKSSSMEPDEIILR. Over residues 551–563 the composition is skewed to polar residues; sequence DIKMSTNNNSNMD.

Belongs to the G-protein coupled receptor Fz/Smo family.

It localises to the membrane. This chain is Frizzled and smoothened-like protein K (fslK), found in Dictyostelium discoideum (Social amoeba).